Consider the following 386-residue polypeptide: L-lactate dehydrogenase (386 aa).

One can recognise an FMN hydroxy acid dehydrogenase domain in the interval 1 to 380 (MIISAASDYR…SGDALSRVTR (380 aa)). Position 24 (tyrosine 24) interacts with substrate. FMN is bound by residues serine 106 and glutamine 127. Tyrosine 129 lines the substrate pocket. Position 155 (threonine 155) interacts with FMN. Residue arginine 164 participates in substrate binding. Lysine 251 contacts FMN. Histidine 275 functions as the Proton acceptor in the catalytic mechanism. Substrate is bound at residue arginine 278. Position 306 to 330 (306 to 330 (DSGIRSGLDVVRMLALGADAVLLGR)) interacts with FMN.

It belongs to the FMN-dependent alpha-hydroxy acid dehydrogenase family. It depends on FMN as a cofactor.

Its subcellular location is the cell inner membrane. It catalyses the reaction (S)-lactate + A = pyruvate + AH2. Catalyzes the conversion of L-lactate to pyruvate. Is coupled to the respiratory chain. The sequence is that of L-lactate dehydrogenase from Xanthomonas campestris pv. campestris (strain B100).